The following is a 447-amino-acid chain: Tubulin alpha-1 chain (447 aa).

8 residues coordinate GTP: glutamine 11, glutamate 72, serine 141, glycine 145, threonine 146, threonine 180, asparagine 207, and asparagine 229. Glutamate 72 contacts Mg(2+). Glutamate 255 is a catalytic residue.

It belongs to the tubulin family. In terms of assembly, dimer of alpha and beta chains. A typical microtubule is a hollow water-filled tube with an outer diameter of 25 nm and an inner diameter of 15 nM. Alpha-beta heterodimers associate head-to-tail to form protofilaments running lengthwise along the microtubule wall with the beta-tubulin subunit facing the microtubule plus end conferring a structural polarity. Microtubules usually have 13 protofilaments but different protofilament numbers can be found in some organisms and specialized cells. It depends on Mg(2+) as a cofactor.

It is found in the cytoplasm. Its subcellular location is the cytoskeleton. The catalysed reaction is GTP + H2O = GDP + phosphate + H(+). Tubulin is the major constituent of microtubules, a cylinder consisting of laterally associated linear protofilaments composed of alpha- and beta-tubulin heterodimers. Microtubules grow by the addition of GTP-tubulin dimers to the microtubule end, where a stabilizing cap forms. Below the cap, tubulin dimers are in GDP-bound state, owing to GTPase activity of alpha-tubulin. This Saccharomyces cerevisiae (strain ATCC 204508 / S288c) (Baker's yeast) protein is Tubulin alpha-1 chain (TUB1).